The sequence spans 7760 residues: Malpinin synthetase (7760 aa).

2 disordered regions span residues 42–115 and 161–180; these read ENPE…VNEK and LDLP…GDRV. The segment covering 65–79 has biased composition (polar residues); it reads TPRSASPLSSYTGSP. The condensation 1 stretch occupies residues 87–389; it reads TELSRTLSGD…LSLDERTFLL (303 aa). The segment covering 164-180 has biased composition (basic and acidic residues); sequence PTDRPRPSHPSFEGDRV. Residues 409–813 are adenylation 1; sequence FEQQAERRPH…GRNDHQVKIR (405 aa). Residues 926–1000 form the Carrier 1 domain; it reads PPQGELETAI…AFAHAIGQHR (75 aa). Ser-961 carries the post-translational modification O-(pantetheine 4'-phosphoryl)serine. A dual epimerase/condensation (E/C) domain 1 region spans residues 1046–1477; that stretch reads QDIYALAPLQ…VLPADERKLL (432 aa). Residues 1498-1893 are adenylation 2; sequence FEQYADRVPN…GRTDYQVKIR (396 aa). A Carrier 2 domain is found at 2003–2077; the sequence is APEGEVENAI…ALAQSIGEHR (75 aa). O-(pantetheine 4'-phosphoryl)serine is present on Ser-2038. Positions 2099–2558 are dual epimerase/condensation (E/C) domain 2; that stretch reads PLIDLNQNDI…LPTEERQLLT (460 aa). Residues 2578–2973 are adenylation 3; sequence FEQHVDRAPD…GRADFQVKIR (396 aa). Residues 3083–3157 form the Carrier 3 domain; that stretch reads APQGAVEAAI…ALAQSIGEHR (75 aa). Ser-3118 bears the O-(pantetheine 4'-phosphoryl)serine mark. Positions 3203 to 3634 are dual epimerase/condensation (E/C) domain 3; that stretch reads QDIYALAPLQ…HLNVLPAEER (432 aa). An adenylation 4 region spans residues 3658–4057; the sequence is FEQQAERTPD…GRNDDQIKIR (400 aa). The Carrier 4 domain occupies 4174 to 4248; sequence APQGEVETAL…AFASRVQEQL (75 aa). O-(pantetheine 4'-phosphoryl)serine is present on Ser-4209. Residues 4267–4705 form a condensation 2 region; sequence LPLSFAQQRL…AAEILSQDER (439 aa). The interval 4729 to 5133 is adenylation 5; it reads FEQRVESTPD…GRNDHQVKIR (405 aa). The 75-residue stretch at 5250-5324 folds into the Carrier 5 domain; sequence APEGEVETAI…VFAASIGHHQ (75 aa). The residue at position 5285 (Ser-5285) is an O-(pantetheine 4'-phosphoryl)serine. The dual dehydration/condensation (C*) domain stretch occupies residues 5370 to 5804; it reads QDIYSLSPLQ…VLPAEERTLL (435 aa). The adenylation 6 stretch occupies residues 5825–6224; sequence FEQQSERTPE…GRNDDQVKIR (400 aa). In terms of domain architecture, Carrier 6 spans 6338 to 6412; that stretch reads APQGEVETAL…ALAQSIGQHH (75 aa). Residue Ser-6373 is modified to O-(pantetheine 4'-phosphoryl)serine. The segment at 6458 to 6890 is dual epimerase/condensation (E/C) domain 4; that stretch reads QDIYALSPLQ…QLDTVPAEEH (433 aa). The adenylation 7 stretch occupies residues 6914–7300; sequence FEHQVERTPA…KFLPDGNVVC (387 aa). One can recognise a Carrier 7 domain in the interval 7428-7503; it reads EPRGAIENIL…ELAPRLLATG (76 aa). Ser-7463 is modified (O-(pantetheine 4'-phosphoryl)serine). The tract at residues 7561–7722 is thioesterase (TE) domain; the sequence is DNGNMASSLD…KPYVQGSIEV (162 aa).

It belongs to the NRP synthetase family.

In terms of biological role, heptamodular nonribosomal peptide synthetase that catalyzes the biosynthesis of malpinins, natural products that show biosurfactant activities. Malpinins are acetylated hexapeptides (Ac-D-Leu/Val-D-Arg-D-Leu/Val-L-Phe/Leu-Dhb-D-Trp) containing a non-canonical amino acid derived from dehydration of L-Trp, (Z)-dehydrobutyrine (Dhb), at position 5, as well as a C-terminal D-amino acid, D-tryptophan, that can be oxidized to kynurenine. Incorporated D-amino acids in positions 1, 3 and 4 are variable resulting in the malpinin A-congeners malpinin B to E. Both modules M1 and M3 have relaxed specificity towards aliphatic amino acids (L-Leu &gt; L-Met &gt; L/D-Val &gt; L-Cys), explaining Val at position 1 and 3 in malpinin A-congeners malpinin B to D. The incorporation of L-Leu, but not N-acetyl-L-Leu by module 1 suggests the N-terminal acetylation occurs at a later stage of biosynthesis. Similar to M1 and M3, M4 has a broad substrate spectrum showing the highest activity with L-Phe followed by other hydrophobic amino acids (L-Phe &gt; L-Met = L-Trp). In contrast, M2, M5 and M6 are highly specific for L-Arg, L-Thr, and L-Trp, respectively. Solely, M7 converted its preferred substrate (L-Phe) with a 15 000-fold reduced turnover rate compared to the most active module M6, indicating that its A domain cannot contribute to the malpinin biosynthesis due to low activity. Since the last T domain in malA is apparently not loaded with an amino acid, either the TE domain must offload the oligopeptide from the preceding T domain or the dual E/C domain of M7 must transfer the final peptide chain to the free acceptor T domain of M7 prior to release. The sequence is that of Malpinin synthetase from Mortierella alpina (Oleaginous fungus).